The primary structure comprises 477 residues: 3-isopropylmalate dehydratase large subunit (477 aa).

Residues cysteine 351, cysteine 411, and cysteine 414 each coordinate [4Fe-4S] cluster.

The protein belongs to the aconitase/IPM isomerase family. LeuC type 1 subfamily. Heterodimer of LeuC and LeuD. [4Fe-4S] cluster serves as cofactor.

It carries out the reaction (2R,3S)-3-isopropylmalate = (2S)-2-isopropylmalate. It functions in the pathway amino-acid biosynthesis; L-leucine biosynthesis; L-leucine from 3-methyl-2-oxobutanoate: step 2/4. In terms of biological role, catalyzes the isomerization between 2-isopropylmalate and 3-isopropylmalate, via the formation of 2-isopropylmaleate. The chain is 3-isopropylmalate dehydratase large subunit from Kineococcus radiotolerans (strain ATCC BAA-149 / DSM 14245 / SRS30216).